We begin with the raw amino-acid sequence, 440 residues long: D-serine dehydratase (440 aa).

An N6-(pyridoxal phosphate)lysine modification is found at Lys-116.

It belongs to the serine/threonine dehydratase family. DsdA subfamily. Monomer. The cofactor is pyridoxal 5'-phosphate.

The enzyme catalyses D-serine = pyruvate + NH4(+). The polypeptide is D-serine dehydratase (Salmonella typhimurium (strain LT2 / SGSC1412 / ATCC 700720)).